Consider the following 263-residue polypeptide: Endonuclease 8 (263 aa).

Pro2 acts as the Schiff-base intermediate with DNA in catalysis. Glu3 functions as the Proton donor in the catalytic mechanism. Lys53 functions as the Proton donor; for beta-elimination activity in the catalytic mechanism. Gln70, Arg125, and Asn169 together coordinate DNA. The FPG-type zinc-finger motif lies at 229 to 263 (KVFHRDGELCERCGGIIEKTTLSSRPFYWCPGCQH). Arg253 (proton donor; for delta-elimination activity) is an active-site residue.

The protein belongs to the FPG family. Zn(2+) is required as a cofactor.

The catalysed reaction is 2'-deoxyribonucleotide-(2'-deoxyribose 5'-phosphate)-2'-deoxyribonucleotide-DNA = a 3'-end 2'-deoxyribonucleotide-(2,3-dehydro-2,3-deoxyribose 5'-phosphate)-DNA + a 5'-end 5'-phospho-2'-deoxyribonucleoside-DNA + H(+). Functionally, involved in base excision repair of DNA damaged by oxidation or by mutagenic agents. Acts as a DNA glycosylase that recognizes and removes damaged bases. Has a preference for oxidized pyrimidines, such as thymine glycol, 5,6-dihydrouracil and 5,6-dihydrothymine. Has AP (apurinic/apyrimidinic) lyase activity and introduces nicks in the DNA strand. Cleaves the DNA backbone by beta-delta elimination to generate a single-strand break at the site of the removed base with both 3'- and 5'-phosphates. The protein is Endonuclease 8 of Shigella flexneri serotype 5b (strain 8401).